The sequence spans 132 residues: MSLYEHVFIARQDLSNAQAEGLIEHFSTVLADNGGKVVDREYWGVKTMAYKINKNRKGHYAFLKSDAPSAAVQEMERLMRLHDDVMRVLTIKVDKHAEGPSIQMQKRDERERGDRGDRSDRGDRGDRGGFRR.

The interval 96–132 (HAEGPSIQMQKRDERERGDRGDRSDRGDRGDRGGFRR) is disordered. Positions 105-132 (QKRDERERGDRGDRSDRGDRGDRGGFRR) are enriched in basic and acidic residues.

It belongs to the bacterial ribosomal protein bS6 family.

Its function is as follows. Binds together with bS18 to 16S ribosomal RNA. The polypeptide is Small ribosomal subunit protein bS6 (Cereibacter sphaeroides (strain ATCC 17023 / DSM 158 / JCM 6121 / CCUG 31486 / LMG 2827 / NBRC 12203 / NCIMB 8253 / ATH 2.4.1.) (Rhodobacter sphaeroides)).